The chain runs to 429 residues: Enolase (429 aa).

A (2R)-2-phosphoglycerate-binding site is contributed by glutamine 162. The Proton donor role is filled by glutamate 204. Residues aspartate 241, glutamate 282, and aspartate 309 each coordinate Mg(2+). (2R)-2-phosphoglycerate contacts are provided by lysine 334, arginine 363, serine 364, and lysine 385. Lysine 334 (proton acceptor) is an active-site residue.

It belongs to the enolase family. The cofactor is Mg(2+).

It localises to the cytoplasm. The protein resides in the secreted. It is found in the cell surface. The catalysed reaction is (2R)-2-phosphoglycerate = phosphoenolpyruvate + H2O. The protein operates within carbohydrate degradation; glycolysis; pyruvate from D-glyceraldehyde 3-phosphate: step 4/5. Its function is as follows. Catalyzes the reversible conversion of 2-phosphoglycerate (2-PG) into phosphoenolpyruvate (PEP). It is essential for the degradation of carbohydrates via glycolysis. The protein is Enolase of Acidothermus cellulolyticus (strain ATCC 43068 / DSM 8971 / 11B).